The chain runs to 146 residues: Large-conductance mechanosensitive channel (146 aa).

The next 2 helical transmembrane spans lie at 14 to 34 (VLDL…VNSL) and 81 to 101 (GLFL…FLLV).

Belongs to the MscL family. In terms of assembly, homopentamer.

It localises to the cell membrane. In terms of biological role, channel that opens in response to stretch forces in the membrane lipid bilayer. May participate in the regulation of osmotic pressure changes within the cell. This Symbiobacterium thermophilum (strain DSM 24528 / JCM 14929 / IAM 14863 / T) protein is Large-conductance mechanosensitive channel.